Consider the following 415-residue polypeptide: Gamma-glutamyl phosphate reductase (415 aa).

The protein belongs to the gamma-glutamyl phosphate reductase family.

It is found in the cytoplasm. The catalysed reaction is L-glutamate 5-semialdehyde + phosphate + NADP(+) = L-glutamyl 5-phosphate + NADPH + H(+). It functions in the pathway amino-acid biosynthesis; L-proline biosynthesis; L-glutamate 5-semialdehyde from L-glutamate: step 2/2. Functionally, catalyzes the NADPH-dependent reduction of L-glutamate 5-phosphate into L-glutamate 5-semialdehyde and phosphate. The product spontaneously undergoes cyclization to form 1-pyrroline-5-carboxylate. The protein is Gamma-glutamyl phosphate reductase of Listeria monocytogenes serotype 4a (strain HCC23).